An 862-amino-acid chain; its full sequence is Probable glutaminase ARB_05535/05536 (862 aa).

Residues 1–19 (MLSWVLLAWAVACSALAGA) form the signal peptide. 7 N-linked (GlcNAc...) asparagine glycosylation sites follow: Asn106, Asn273, Asn436, Asn448, Asn486, Asn610, and Asn744. The segment at 798–862 (FLDDKDNNSP…SQMTIVNEND (65 aa)) is disordered. Over residues 853-862 (SQMTIVNEND) the composition is skewed to polar residues.

It belongs to the fungal glutaminase gtaA family.

It is found in the secreted. It carries out the reaction L-glutamine + H2O = L-glutamate + NH4(+). In terms of biological role, glutaminase catalyzes the hydrolysis of glutamine to glutamic acid and plays a key role in nitrogen metabolism. The chain is Probable glutaminase ARB_05535/05536 from Arthroderma benhamiae (strain ATCC MYA-4681 / CBS 112371) (Trichophyton mentagrophytes).